The sequence spans 465 residues: MESLRIYNTLARDKQVFVPRQSGEVRMYVCGITVYDYCHVGHARMLVVFDLVQRWLRAIGYRVTYVRNITDIDDKIIRRAVENGETIKSLTDRFIGAMHEDESALGIQRPDIEPRATQFIPQMLGMIETLETNGYAYQASDGDVNYSVRKFTNYGKLSGKSLDDLRAGERVAANDAKEDPLDFVLWKRAKPEDPEGASWASKYGMGRPGWHIECSAMGCSLLGNHFDIHGGGQDLQFPHHENEIAQSEGATGETFVNYWMHNGFVQVDNEKMSKSLGNFFTIREVLERYDAEVMRFFIVRTHYRSPLNYSDVHLDDARASLTRLYTALKDVDADTLALDWNEPHAQRFAAAMNDDFNTPVAVATLFELAGEVNRTRDASLARQLKQLAGLLGLLGREPRAFLQQASGAAQAGGLAADEIEAKIAARVAAKQAKDYAEADRIRAELLEAGIALEDKPGGSTEWRRV.

C30 lines the Zn(2+) pocket. A 'HIGH' region motif is present at residues 32–42 (ITVYDYCHVGH). The Zn(2+) site is built by C214, H239, and E243. A 'KMSKS' region motif is present at residues 271–275 (KMSKS). Residue K274 participates in ATP binding.

This sequence belongs to the class-I aminoacyl-tRNA synthetase family. Monomer. Zn(2+) serves as cofactor.

It localises to the cytoplasm. The enzyme catalyses tRNA(Cys) + L-cysteine + ATP = L-cysteinyl-tRNA(Cys) + AMP + diphosphate. The protein is Cysteine--tRNA ligase of Burkholderia cenocepacia (strain ATCC BAA-245 / DSM 16553 / LMG 16656 / NCTC 13227 / J2315 / CF5610) (Burkholderia cepacia (strain J2315)).